Reading from the N-terminus, the 158-residue chain is Snaclec stejaggregin-A subunit alpha (158 aa).

A signal peptide spans 1–23; that stretch reads MGRFISVSFGLLVVFLSLSGTGA. 3 disulfide bridges follow: Cys27–Cys38, Cys55–Cys152, and Cys127–Cys144. Positions 34 to 153 constitute a C-type lectin domain; sequence YDWYCYKPFN…CQAKNPFVCK (120 aa).

The protein belongs to the snaclec family. Heteromultimer; disulfide-linked. In terms of tissue distribution, expressed by the venom gland.

It is found in the secreted. Functionally, interferes with one step of hemostasis (modulation of platelet aggregation, or coagulation cascade, for example). The sequence is that of Snaclec stejaggregin-A subunit alpha from Trimeresurus stejnegeri (Chinese green tree viper).